Consider the following 372-residue polypeptide: Delta-type opioid receptor (372 aa).

Over 1 to 47 (MELVPSARAELQSSPLVNLSDAFPSAFPSAGANASGSPGARSASSLA) the chain is Extracellular. 2 N-linked (GlcNAc...) asparagine glycosylation sites follow: asparagine 18 and asparagine 33. The chain crosses the membrane as a helical span at residues 48–75 (LAIAITALYSAVCAVGLLGNVLVMFGIV). Residues 76–85 (RYTKLKTATN) are Cytoplasmic-facing. A helical membrane pass occupies residues 86-110 (IYIFNLALADALATSTLPFQSAKYL). Over 111 to 122 (METWPFGELLCK) the chain is Extracellular. Cysteines 121 and 198 form a disulfide. A helical membrane pass occupies residues 123–144 (AVLSIDYYNMFTSIFTLTMMSV). Topologically, residues 145–163 (DRYIAVCHPVKALDFRTPA) are cytoplasmic. The helical transmembrane segment at 164 to 186 (KAKLINICIWVLASGVGVPIMVM) threads the bilayer. At 187 to 206 (AVTQPRDGAVVCMLQFPSPS) the chain is on the extracellular side. Residues 207–238 (WYWDTVTKICVFLFAFVVPILIITVCYGLMLL) traverse the membrane as a helical segment. The Cytoplasmic segment spans residues 239 to 261 (RLRSVRLLSGSKEKDRSLRRITR). The helical transmembrane segment at 262–284 (MVLVVVGAFVVCWAPIHIFVIVW) threads the bilayer. Over 285-299 (TLVDINRRDPLVVAA) the chain is Extracellular. A helical membrane pass occupies residues 300–321 (LHLCIALGYANSSLNPVLYAFL). At 322–372 (DENFKRCFRQLCRTPCGRQEPGSLRRPRQATTRERVTACTPSDGPGGGAAA) the chain is on the cytoplasmic side. Cysteine 333 carries S-palmitoyl cysteine lipidation. The segment at 340–372 (QEPGSLRRPRQATTRERVTACTPSDGPGGGAAA) is disordered.

It belongs to the G-protein coupled receptor 1 family. May form homooligomers. Forms a heterodimer with OPRM1. Interacts with GPRASP1. Interacts with RTP4; the interaction promotes cell surface localization of the OPRD1-OPRM1 heterodimer. Post-translationally, ubiquitinated. A basal ubiquitination seems not to be related to degradation. Ubiquitination is increased upon formation of OPRM1:OPRD1 oligomers leading to proteasomal degradation; the ubiquitination is diminished by RTP4. In terms of tissue distribution, brain, with high concentrations in the basal ganglia and limbic regions.

Its subcellular location is the cell membrane. Functionally, G-protein coupled receptor that functions as a receptor for endogenous enkephalins and for a subset of other opioids. Ligand binding causes a conformation change that triggers signaling via guanine nucleotide-binding proteins (G proteins) and modulates the activity of down-stream effectors, such as adenylate cyclase. Signaling leads to the inhibition of adenylate cyclase activity. Inhibits neurotransmitter release by reducing calcium ion currents and increasing potassium ion conductance. Plays a role in the perception of pain and in opiate-mediated analgesia. Plays a role in developing analgesic tolerance to morphine. This chain is Delta-type opioid receptor (Oprd1), found in Mus musculus (Mouse).